We begin with the raw amino-acid sequence, 398 residues long: E3 ubiquitin-protein ligase RSL1 (398 aa).

A TRIAD supradomain region spans residues Gln155–Cys374. Zn(2+) contacts are provided by Cys159, Cys162, Cys183, Cys186, Cys246, Cys251, Cys271, Cys274, Cys279, Cys282, His287, Cys292, Cys321, and Cys324. The segment at Cys159–Arg207 adopts an RING-type 3; degenerate zinc-finger fold. An RING-type 1 zinc finger spans residues Cys159–Cys208. The IBR-type zinc finger occupies Thr233 to Cys292. Residues Cys321–Cys349 form an RING-type 2; atypical zinc finger. Residues Cys321–Cys356 form an RING-type 4; degenerate zinc finger. Cys334 is a catalytic residue. Cys339, Cys341, Cys346, Cys349, His358, and Cys370 together coordinate Zn(2+). Residues Cys374 to Val394 traverse the membrane as a helical segment.

Belongs to the RBR family. In terms of assembly, interacts with the PYL4 and PYR1 ABA receptors at the plasma membrane. Zn(2+) serves as cofactor.

The protein resides in the cell membrane. The protein localises to the vacuole membrane. The enzyme catalyses [E2 ubiquitin-conjugating enzyme]-S-ubiquitinyl-L-cysteine + [acceptor protein]-L-lysine = [E2 ubiquitin-conjugating enzyme]-L-cysteine + [acceptor protein]-N(6)-ubiquitinyl-L-lysine.. It functions in the pathway protein modification; protein ubiquitination. Functionally, acts as an E3 ubiquitin-protein ligase, or as part of E3 complex, which accepts ubiquitin from specific E2 ubiquitin-conjugating enzymes and then transfers it to substrates. Negative regulator of the abscisic acid (ABA) signaling pathway which targets PYL4 and PYR1 ABA receptors in plasma membrane to promote their FREE1/FYVE1-dependent trafficking and degradation upon ubiquitynation; this process involves clathrin-mediated endocytosis and trafficking through the ESCRT pathway. Involved in the maintenance of seed longevity. May enhance gibberellins responses. The chain is E3 ubiquitin-protein ligase RSL1 from Arabidopsis thaliana (Mouse-ear cress).